The following is a 161-amino-acid chain: Transcription elongation factor GreA (161 aa).

The stretch at 43–68 (SENAEYEAAREKQAFVEARIKHLEDI) forms a coiled coil.

The protein belongs to the GreA/GreB family.

In terms of biological role, necessary for efficient RNA polymerase transcription elongation past template-encoded arresting sites. The arresting sites in DNA have the property of trapping a certain fraction of elongating RNA polymerases that pass through, resulting in locked ternary complexes. Cleavage of the nascent transcript by cleavage factors such as GreA or GreB allows the resumption of elongation from the new 3'terminus. GreA releases sequences of 2 to 3 nucleotides. This is Transcription elongation factor GreA from Rickettsia bellii (strain OSU 85-389).